The primary structure comprises 135 residues: Sex-regulated protein janus-A (135 aa).

Lysine 37 contributes to the substrate binding site. The active-site Proton acceptor is the histidine 63. Residue 104 to 106 (SQG) participates in substrate binding.

It belongs to the janus family.

Functionally, janA and janB regulate somatic sex differentiation. The sequence is that of Sex-regulated protein janus-A (janA) from Drosophila yakuba (Fruit fly).